A 278-amino-acid chain; its full sequence is Sulfur carrier protein FdhD (278 aa).

The active-site Cysteine persulfide intermediate is the Cys-121. Residue 260 to 265 (FCKPGR) coordinates Mo-bis(molybdopterin guanine dinucleotide).

The protein belongs to the FdhD family.

The protein resides in the cytoplasm. Its function is as follows. Required for formate dehydrogenase (FDH) activity. Acts as a sulfur carrier protein that transfers sulfur from IscS to the molybdenum cofactor prior to its insertion into FDH. The polypeptide is Sulfur carrier protein FdhD (Salmonella heidelberg (strain SL476)).